Here is a 545-residue protein sequence, read N- to C-terminus: Methionine--tRNA ligase (545 aa).

Residues 10 to 20 carry the 'HIGH' region motif; it reads PYANGSLHIGH. Zn(2+) is bound by residues Cys-141, Cys-144, Cys-153, and Cys-156. The short motif at 329 to 333 is the 'KMSKS' region element; the sequence is KISTS. Thr-332 serves as a coordination point for ATP.

Belongs to the class-I aminoacyl-tRNA synthetase family. MetG type 1 subfamily. In terms of assembly, monomer. Zn(2+) is required as a cofactor.

The protein localises to the cytoplasm. The catalysed reaction is tRNA(Met) + L-methionine + ATP = L-methionyl-tRNA(Met) + AMP + diphosphate. In terms of biological role, is required not only for elongation of protein synthesis but also for the initiation of all mRNA translation through initiator tRNA(fMet) aminoacylation. The chain is Methionine--tRNA ligase from Streptococcus pneumoniae (strain 70585).